The sequence spans 327 residues: Aspartate--ammonia ligase (327 aa).

It belongs to the class-II aminoacyl-tRNA synthetase family. AsnA subfamily.

It is found in the cytoplasm. It catalyses the reaction L-aspartate + NH4(+) + ATP = L-asparagine + AMP + diphosphate + H(+). The protein operates within amino-acid biosynthesis; L-asparagine biosynthesis; L-asparagine from L-aspartate (ammonia route): step 1/1. The chain is Aspartate--ammonia ligase from Bacillus cereus (strain AH187).